Consider the following 986-residue polypeptide: Regulator of telomere elongation helicase 1 homolog (986 aa).

Residues 7-326 (AGIPVHFPFE…KEMLLELEKA (320 aa)) enclose the Helicase ATP-binding domain. Residue 42-49 (SPTGTGKT) participates in ATP binding. [4Fe-4S] cluster-binding residues include C148, C166, C175, and C211. Positions 254–257 (DEGH) match the DEAH box motif. The residue at position 875 (T875) is a Phosphothreonine.

The protein belongs to the helicase family. RAD3/XPD subfamily.

The protein localises to the nucleus. The enzyme catalyses ATP + H2O = ADP + phosphate + H(+). Functionally, a probable ATP-dependent DNA helicase implicated in DNA repair and the maintenance of genomic stability. Acts as an anti-recombinase to counteract toxic recombination and limit crossover during meiosis. Regulates meiotic recombination and crossover homeostasis by physically dissociating strand invasion events and thereby promotes noncrossover repair by meiotic synthesis dependent strand annealing (SDSA) as well as disassembly of D loop recombination intermediates. In Drosophila grimshawi (Hawaiian fruit fly), this protein is Regulator of telomere elongation helicase 1 homolog.